The sequence spans 312 residues: DNA-directed RNA polymerase subunit alpha (312 aa).

Residues 1-226 (MIEFEKPNIT…EHLDLFTDLT (226 aa)) form an alpha N-terminal domain (alpha-NTD) region. An alpha C-terminal domain (alpha-CTD) region spans residues 244 to 312 (DHVLERTIEE…DLGLGLKNDK (69 aa)).

The protein belongs to the RNA polymerase alpha chain family. Homodimer. The RNAP catalytic core consists of 2 alpha, 1 beta, 1 beta' and 1 omega subunit. When a sigma factor is associated with the core the holoenzyme is formed, which can initiate transcription.

It catalyses the reaction RNA(n) + a ribonucleoside 5'-triphosphate = RNA(n+1) + diphosphate. In terms of biological role, DNA-dependent RNA polymerase catalyzes the transcription of DNA into RNA using the four ribonucleoside triphosphates as substrates. In Streptococcus gordonii (strain Challis / ATCC 35105 / BCRC 15272 / CH1 / DL1 / V288), this protein is DNA-directed RNA polymerase subunit alpha.